Consider the following 387-residue polypeptide: S-adenosylmethionine synthase (387 aa).

His-16 serves as a coordination point for ATP. Asp-18 is a Mg(2+) binding site. Glu-44 is a K(+) binding site. L-methionine is bound by residues Glu-57 and Gln-100. Residues 100 to 110 (QSADIAVGVDE) are flexible loop. ATP contacts are provided by residues 165 to 167 (DAK), Asp-241, 247 to 248 (RK), Ala-264, and Lys-268. Residue Asp-241 participates in L-methionine binding. Lys-272 is a binding site for L-methionine.

Belongs to the AdoMet synthase family. Homotetramer; dimer of dimers. Mg(2+) is required as a cofactor. The cofactor is K(+).

It localises to the cytoplasm. The enzyme catalyses L-methionine + ATP + H2O = S-adenosyl-L-methionine + phosphate + diphosphate. It participates in amino-acid biosynthesis; S-adenosyl-L-methionine biosynthesis; S-adenosyl-L-methionine from L-methionine: step 1/1. Its function is as follows. Catalyzes the formation of S-adenosylmethionine (AdoMet) from methionine and ATP. The overall synthetic reaction is composed of two sequential steps, AdoMet formation and the subsequent tripolyphosphate hydrolysis which occurs prior to release of AdoMet from the enzyme. This is S-adenosylmethionine synthase from Marinomonas sp. (strain MWYL1).